Reading from the N-terminus, the 446-residue chain is Probable carboxylesterase 16 (446 aa).

A disordered region spans residues 84–131 (PEPDSLRHKDNYNHQPRSDRRHSYGPNHNSPAPAERNESRRNSYGCNN). Residues 87–105 (DSLRHKDNYNHQPRSDRRH) are compositionally biased toward basic and acidic residues. The Involved in the stabilization of the negatively charged intermediate by the formation of the oxyanion hole signature appears at 158 to 160 (HGG). Catalysis depends on residues S274, D378, and H408.

The protein belongs to the 'GDXG' lipolytic enzyme family. Expressed in roots, leaves, stems, flowers and siliques.

The catalysed reaction is a carboxylic ester + H2O = an alcohol + a carboxylate + H(+). Its function is as follows. Carboxylesterase acting on esters with varying acyl chain length. The protein is Probable carboxylesterase 16 (CXE16) of Arabidopsis thaliana (Mouse-ear cress).